Here is a 264-residue protein sequence, read N- to C-terminus: Thymidylate synthase (264 aa).

Residue Arg-21 participates in dUMP binding. His-51 contributes to the (6R)-5,10-methylene-5,6,7,8-tetrahydrofolate binding site. Position 126 to 127 (126 to 127 (RR)) interacts with dUMP. Cys-146 functions as the Nucleophile in the catalytic mechanism. Residues 166–169 (RSCD), Asn-177, and 207–209 (HLY) each bind dUMP. (6R)-5,10-methylene-5,6,7,8-tetrahydrofolate is bound at residue Asp-169. Ala-263 is a binding site for (6R)-5,10-methylene-5,6,7,8-tetrahydrofolate.

Belongs to the thymidylate synthase family. Bacterial-type ThyA subfamily. As to quaternary structure, homodimer.

It is found in the cytoplasm. It carries out the reaction dUMP + (6R)-5,10-methylene-5,6,7,8-tetrahydrofolate = 7,8-dihydrofolate + dTMP. The protein operates within pyrimidine metabolism; dTTP biosynthesis. In terms of biological role, catalyzes the reductive methylation of 2'-deoxyuridine-5'-monophosphate (dUMP) to 2'-deoxythymidine-5'-monophosphate (dTMP) while utilizing 5,10-methylenetetrahydrofolate (mTHF) as the methyl donor and reductant in the reaction, yielding dihydrofolate (DHF) as a by-product. This enzymatic reaction provides an intracellular de novo source of dTMP, an essential precursor for DNA biosynthesis. The chain is Thymidylate synthase from Baumannia cicadellinicola subsp. Homalodisca coagulata.